The sequence spans 296 residues: Ribosomal RNA small subunit methyltransferase A (296 aa).

Asn31, Leu33, Gly58, Glu79, Asp111, and Asn136 together coordinate S-adenosyl-L-methionine.

It belongs to the class I-like SAM-binding methyltransferase superfamily. rRNA adenine N(6)-methyltransferase family. RsmA subfamily.

It is found in the cytoplasm. The enzyme catalyses adenosine(1518)/adenosine(1519) in 16S rRNA + 4 S-adenosyl-L-methionine = N(6)-dimethyladenosine(1518)/N(6)-dimethyladenosine(1519) in 16S rRNA + 4 S-adenosyl-L-homocysteine + 4 H(+). Its function is as follows. Specifically dimethylates two adjacent adenosines (A1518 and A1519) in the loop of a conserved hairpin near the 3'-end of 16S rRNA in the 30S particle. May play a critical role in biogenesis of 30S subunits. The sequence is that of Ribosomal RNA small subunit methyltransferase A from Lactobacillus johnsonii (strain CNCM I-12250 / La1 / NCC 533).